Consider the following 228-residue polypeptide: N-(5'-phosphoribosyl)anthranilate isomerase (228 aa).

This sequence belongs to the TrpF family.

The enzyme catalyses N-(5-phospho-beta-D-ribosyl)anthranilate = 1-(2-carboxyphenylamino)-1-deoxy-D-ribulose 5-phosphate. It participates in amino-acid biosynthesis; L-tryptophan biosynthesis; L-tryptophan from chorismate: step 3/5. The polypeptide is N-(5'-phosphoribosyl)anthranilate isomerase (Azorhizobium caulinodans (strain ATCC 43989 / DSM 5975 / JCM 20966 / LMG 6465 / NBRC 14845 / NCIMB 13405 / ORS 571)).